We begin with the raw amino-acid sequence, 867 residues long: MDNPQALPLFLLLASLVGILTLRASSGLQQTNFSSAFSSDSKSSSQGLGVEVPSIKPPSWKVPDQFLDSKASAGISDSSWFPEALSSNMSGSFWSNVSAEGQDLSPVSPFSETPGSEVFPDISDPQVPAKDPKPSFTVKTPASNISTQVSHTKLSVEAPDSKFSPDDMDLKLSAQSPESKFSAETHSAASFPQQVGGPLAVLVGTTIRLPLVPIPNPGPPTSLVVWRRGSKVLAAGGLGPGAPLISLDPAHRDHLRFDQARGVLELASAQLDDAGVYTAEVIRAGVSQQTHEFTVGVYEPLPQLSVQPKAPETEEGAAELRLRCLGWGPGRGELSWSRDGRALEAAESEGAETPRMRSEGDQLLIVRPVRSDHARYTCRVRSPFGHREAAADVSVFYGPDPPTITVSSDRDAAPARFVTAGSNVTLRCAAASRPPADITWSLADPAEAAVPAGSRLLLPAVGPGHAGTYACLAANPRTGRRRRSLLNLTVADLPPGAPQCSVEGGPGDRSLRFRCSWPGGAPAASLQFQGLPEGIRAGPVSSVLLAAVPAHPRLSGVPITCLARHLVATRTCTVTPEAPREVLLHPLVAETRLGEAEVALEASGCPPPSRASWAREGRPLAPGGGSRLRLSQDGRKLHIGNFSLDWDLGNYSVLCSGALGAGGDQITLIGPSISSWRLQRARDAAVLTWDVERGALISSFEIQAWPDGPALGRTSTYRDWVSLLILGPQERSAVVPLPPRNPGTWTFRILPILGGQPGTPSQSRVYRAGPTLSHGAIAGIVLGSLLGLALLAVLLLLCICCLCRFRGKTPEKKKHPSTLVPVVTPSEKKMHSVTPVEISWPLDLKVPLEDHSSTRAYQAQTPVQLSL.

The N-terminal stretch at Met-1–Gly-27 is a signal peptide. The Extracellular segment spans residues Leu-28 to Ala-776. The N-linked (GlcNAc...) asparagine glycan is linked to Asn-32. Over residues Ser-35–Ser-45 the composition is skewed to low complexity. The segment at Ser-35–Trp-60 is disordered. N-linked (GlcNAc...) asparagine glycans are attached at residues Asn-88, Asn-96, and Asn-144. The tract at residues Leu-104–His-186 is disordered. Polar residues predominate over residues Thr-137–Lys-153. A compositionally biased stretch (basic and acidic residues) spans Pro-159–Leu-170. The segment covering Ser-173–His-186 has biased composition (polar residues). Ig-like C2-type domains follow at residues Pro-302–Ser-394 and Pro-402–Asn-487. The cysteines at positions 324 and 378 are disulfide-linked. N-linked (GlcNAc...) asparagine glycosylation occurs at Asn-423. The cysteines at positions 428 and 471 are disulfide-linked. Residue Asn-487 is glycosylated (N-linked (GlcNAc...) asparagine). Positions Ala-602 to Arg-627 are disordered. Asn-641 and Asn-650 each carry an N-linked (GlcNAc...) asparagine glycan. A helical membrane pass occupies residues Ile-777–Leu-797. Over Cys-798–Leu-867 the chain is Cytoplasmic.

In terms of tissue distribution, expressed in the esophagus, particularly in the suprabasilar layers of the epithelium. Expression is largely reduced in esophageal metaplasia, dysplasia, and adenocarcinoma lesions.

It is found in the membrane. This Homo sapiens (Human) protein is V-set and immunoglobulin domain-containing protein 10-like (VSIG10L).